Consider the following 268-residue polypeptide: Interleukin-2 receptor subunit alpha (268 aa).

Positions 1–21 (MEPCLLMWGILTFITVSGYTT) are cleaved as a signal peptide. The Sushi 1 domain maps to 22-81 (DLCDDDPPNLKHATFKALTYKTGTVLNCDCERGFRRISSYMHCTGNSSHASWENKCRCKS). Topologically, residues 22 to 237 (DLCDDDPPNL…ESFIFTTEYQ (216 aa)) are extracellular. 3 cysteine pairs are disulfide-bonded: C24/C64, C49/C77, and C51/C79. N67 carries N-linked (GlcNAc...) asparagine glycosylation. The segment at 83 to 112 (SPENRKGKVTTKPEEQKGENPTEMQSQTPP) is disordered. Positions 85-102 (ENRKGKVTTKPEEQKGEN) are enriched in basic and acidic residues. The region spanning 120-183 (GHCREPPPWE…WTQPPLKCIS (64 aa)) is the Sushi 2 domain. Intrachain disulfides connect C122–C165 and C149–C181. The disordered stretch occupies residues 186 to 213 (QFPDDEELQASTDAPAGRDTSSPFITTS). Positions 204–213 (DTSSPFITTS) are enriched in polar residues. A helical membrane pass occupies residues 238-258 (IAVASCVLLLISIVLLSGLTW). Residues 259–268 (QRRRRKSRTI) lie on the Cytoplasmic side of the membrane.

Non-covalent dimer of an alpha and a beta subunit. IL2R exists in 3 different forms: a high affinity dimer, an intermediate affinity monomer (beta subunit), and a low affinity monomer (alpha subunit). The high and intermediate affinity forms also associate with a gamma subunit.

It localises to the membrane. Functionally, receptor for interleukin-2. The receptor is involved in the regulation of immune tolerance by controlling regulatory T cells (TREGs) activity. TREGs suppress the activation and expansion of autoreactive T-cells. The chain is Interleukin-2 receptor subunit alpha (IL2RA) from Canis lupus familiaris (Dog).